The following is a 212-amino-acid chain: MTGAESLVVEVEASRRILGDGFAGAVRFGELLAEHGEERGLIGPREVPRLWLRHIVNSAAVARWLPDAGSVADVGTGAGLPGVVLALMRPDLDVHLVEPMERRVAWLSELRDELDLDNVTLHQVQAQELHGKLKVQAVTARAVAPLGKLARWTLPLLSRRGVLLAQKGARAQAELDEAAVDLRDFAVDTASVHDVDLLGDGETTRVVEVRLR.

S-adenosyl-L-methionine-binding positions include Gly-75, Leu-80, 126–127, and Arg-141; that span reads AQ.

This sequence belongs to the methyltransferase superfamily. RNA methyltransferase RsmG family.

It is found in the cytoplasm. Functionally, specifically methylates the N7 position of guanine in position 518 of 16S rRNA. In Beutenbergia cavernae (strain ATCC BAA-8 / DSM 12333 / CCUG 43141 / JCM 11478 / NBRC 16432 / NCIMB 13614 / HKI 0122), this protein is Ribosomal RNA small subunit methyltransferase G.